Here is a 294-residue protein sequence, read N- to C-terminus: tRNA pseudouridine synthase B (294 aa).

Asp-38 functions as the Nucleophile in the catalytic mechanism.

It belongs to the pseudouridine synthase TruB family. Type 1 subfamily.

It catalyses the reaction uridine(55) in tRNA = pseudouridine(55) in tRNA. In terms of biological role, responsible for synthesis of pseudouridine from uracil-55 in the psi GC loop of transfer RNAs. The chain is tRNA pseudouridine synthase B from Clostridium perfringens (strain 13 / Type A).